Reading from the N-terminus, the 306-residue chain is Mitochondrial brown fat uncoupling protein 1 (306 aa).

Residues 1–10 (MVGTTTTDVP) are Mitochondrial intermembrane-facing. The helical transmembrane segment at 11-32 (PTMGVKIFSAGVAACLADVITF) threads the bilayer. Solcar repeat units follow at residues 11-102 (PTMG…VQEF), 110-200 (PSLG…MKGA), and 209-294 (DDVP…LKGE). Residues 33–73 (PLDTAKVRQQIQGEFPITSGIRYKGVLGTITTLAKTEGPLK) are Mitochondrial matrix-facing. Residue Lys56 participates in fatty acid 16:0 binding. Residues 74-96 (LYSGLPAGLQRQISFASLRIGLY) form a helical membrane-spanning segment. Residues 97–115 (DTVQEFFTSGEETPSLGSK) are Mitochondrial intermembrane-facing. Residues 116-132 (ISAGLTTGGVAVFIGQP) traverse the membrane as a helical segment. The Mitochondrial matrix portion of the chain corresponds to 133–177 (TEVVKVRLQAQSHLHGLKPRYTGTYNAYRIIATTESLTSLWKGTT). A helical transmembrane segment spans residues 178 to 194 (PNLLRNVIINCTELVTY). At 195–211 (DLMKGALVRNEILADDV) the chain is on the mitochondrial intermembrane side. A helical membrane pass occupies residues 212–231 (PCHFVSALIAGFCTTLLSSP). Over 232-265 (VDVVKTRFINSPPGQYASVPNCAMTMFTKEGPTA) the chain is Mitochondrial matrix. A Cysteine sulfenic acid (-SOH) modification is found at Cys253. Residues 266 to 288 (FFKGFVPSFLRLGSWNVIMFVCF) form a helical membrane-spanning segment. Lys268 contributes to the fatty acid 16:0 binding site. The Mitochondrial intermembrane segment spans residues 289-306 (EKLKGELMRSRQTVDCAT).

Belongs to the mitochondrial carrier (TC 2.A.29) family. As to quaternary structure, most probably functions as a monomer. Binds one purine nucleotide per monomer. However, has also been suggested to function as a homodimer or a homotetramer. Tightly associates with cardiolipin in the mitochondrion inner membrane; may stabilize and regulate its activity. May undergo sulfenylation upon cold exposure. May increase the sensitivity of UCP1 thermogenic function to the activation by noradrenaline probably through structural effects. In terms of processing, may undergo ubiquitin-mediated proteasomal degradation. Brown adipose tissue.

The protein resides in the mitochondrion inner membrane. The catalysed reaction is H(+)(in) = H(+)(out). With respect to regulation, has no constitutive proton transporter activity and has to be activated by long-chain fatty acids/LCFAs. Inhibited by purine nucleotides. Both purine nucleotides and LCFAs bind the cytosolic side of the transporter and directly compete to activate or inhibit it. Activated by noradrenaline and reactive oxygen species. Despite lacking canonical translational encoding for selenocysteine, a small pool of the protein has been observed to selectively incorporate selenocysteine at 'Cys-253'. Selenocysteine-modified protein is highly sensitive to redox modification and may constitute a pool of protein highly sensitive to activation by elevated levels of reactive oxygen species (ROS). Functionally, mitochondrial protein responsible for thermogenic respiration, a specialized capacity of brown adipose tissue and beige fat that participates in non-shivering adaptive thermogenesis to temperature and diet variations and more generally to the regulation of energy balance. Functions as a long-chain fatty acid/LCFA and proton symporter, simultaneously transporting one LCFA and one proton through the inner mitochondrial membrane. However, LCFAs remaining associated with the transporter via their hydrophobic tails, it results in an apparent transport of protons activated by LCFAs. Thereby, dissipates the mitochondrial proton gradient and converts the energy of substrate oxydation into heat instead of ATP. Regulates the production of reactive oxygen species/ROS by mitochondria. This is Mitochondrial brown fat uncoupling protein 1 from Oryctolagus cuniculus (Rabbit).